We begin with the raw amino-acid sequence, 510 residues long: ATP synthase subunit alpha, mitochondrial (510 aa).

Position 171–178 (Gly-171–Thr-178) interacts with ATP.

In terms of assembly, F-type ATP synthases have 2 components, the catalytic core F(1) and the membrane-embedded component F(0), linked together by a central stalk and a peripheral stalk. The central stalk, also called rotor shaft, is often seen as part of F(1). The peripheral stalk is seen as part of F(0). F(0) contains the membrane channel next to the rotor. F-type ATP synthases form dimers but each monomer functions independently in ATP generation. The dimer consists of 18 different polypeptides: ATP1 (subunit alpha, part of F(1), 3 molecules per monomer), ATP2 (subunit beta, part of F(1), 3 molecules per monomer), ATP3 (subunit gamma, part of the central stalk), ATP4 (subunit b, part of the peripheral stalk), ATP5/OSCP (subunit 5/OSCP, part of the peripheral stalk), ATP6 (subunit a, part of the peripheral stalk), ATP7 (subunit d, part of the peripheral stalk), ATP8 (subunit 8, part of the peripheral stalk), OLI1 (subunit c, part of the rotor, 10 molecules per monomer), ATP14 (subunit h, part of the peripheral stalk), ATP15 (subunit epsilon, part of the central stalk), ATP16 (subunit delta, part of the central stalk), ATP17 (subunit f, part of the peripheral stalk), ATP18 (subunit i/j, part of the peripheral stalk). Dimer-specific subunits are ATP19 (subunit k, at interface between monomers), ATP20 (subunit g, at interface between monomers), TIM11 (subunit e, at interface between monomers). Also contains subunit L.

It is found in the mitochondrion inner membrane. Mitochondrial membrane ATP synthase (F(1)F(0) ATP synthase or Complex V) produces ATP from ADP in the presence of a proton gradient across the membrane which is generated by electron transport complexes of the respiratory chain. F-type ATP synthases consist of two structural domains, F(1) - containing the extramembraneous catalytic core, and F(0) - containing the membrane proton channel, linked together by a central stalk and a peripheral stalk. During catalysis, ATP synthesis in the catalytic domain of F(1) is coupled via a rotary mechanism of the central stalk subunits to proton translocation. Subunits alpha/ATP1 and beta/ATP2 form the catalytic core in F(1). Rotation of the central stalk against the surrounding alpha/ATP1(3)beta/ATP2(3) subunits leads to hydrolysis of ATP in three separate catalytic sites on the beta/ATP2 subunits. Subunit alpha/ATP1 does not bear the catalytic high-affinity ATP-binding sites. This Pichia angusta (Yeast) protein is ATP synthase subunit alpha, mitochondrial.